We begin with the raw amino-acid sequence, 28 residues long: Potassium channel toxin alpha-KTx 9.10 (28 aa).

3 cysteine pairs are disulfide-bonded: Cys3/Cys19, Cys6/Cys24, and Cys10/Cys26.

It belongs to the short scorpion toxin superfamily. Potassium channel inhibitor family. Alpha-KTx 09 subfamily. Expressed by the venom gland.

The protein resides in the secreted. In terms of biological role, blocks Shaker potassium channels. The chain is Potassium channel toxin alpha-KTx 9.10 from Mesobuthus eupeus (Lesser Asian scorpion).